The chain runs to 806 residues: Sperm head and tail associated protein (806 aa).

4 disordered regions span residues 1-36 (MNSSPPFLLKISAPSTSPQADCPNNYSFPPESPSSC), 257-329 (TPAS…MSGS), 428-496 (LNNQ…CPQP), and 707-806 (SQIN…SKKK). Positions 13 to 27 (APSTSPQADCPNNYS) are enriched in polar residues. Low complexity predominate over residues 277–290 (PPLSSASSPPSGNP). A compositionally biased stretch (polar residues) spans 320-329 (LSSQAGMSGS). The interval 521–806 (KEPPPETAVL…QIKSPHSKKK (286 aa)) is interaction with CRISP2. Composition is skewed to low complexity over residues 710 to 723 (NHQNKSQSPNKNSS) and 733 to 754 (RRGAFQSRSRSRSSSPLQSSTQ). Polar residues predominate over residues 773 to 788 (QSQSPADGKIESQSKS).

As to quaternary structure, interacts with CRISP2. As to expression, isoforms 3 and 4 are expressed in testis (at protein level).

It is found in the cytoplasm. In terms of biological role, plays a role during spermatogenesis. The chain is Sperm head and tail associated protein (Nsun4) from Mus musculus (Mouse).